An 86-amino-acid chain; its full sequence is Small ribosomal subunit protein uS17 (86 aa).

Belongs to the universal ribosomal protein uS17 family. As to quaternary structure, part of the 30S ribosomal subunit.

Its function is as follows. One of the primary rRNA binding proteins, it binds specifically to the 5'-end of 16S ribosomal RNA. This Bifidobacterium adolescentis (strain ATCC 15703 / DSM 20083 / NCTC 11814 / E194a) protein is Small ribosomal subunit protein uS17.